The sequence spans 588 residues: MSKRTTYCGLVTEAFLGQEITLKGWVNNRRDLGGLIFVDLRDREGIVQVVFNPAFSEEALKIAETVRSEYVVEVQGTVTKRDPETVNPKIKTGQVEVQVTNIKVINKSETPPFSINEENVNVDENIRLKYRYLDLRRQELAQTFKMRHQITRSIRQYLDDEGFFDIETPVLTKSTPEGARDYLVPSRVHDGEFYALPQSPQLFKQLLMISGFDKYYQIVKCFRDEDLRADRQPEFTQVDIEMSFVDQEDVMQMGEEMLKKVVKEVKGVEINGAFPRMTYKEAMRRYGSDKPDTRFEMELIDVSQLGRDMDFKVFKDTVENDGEIKAIVAKGAAEQYTRKDMDALTEFVNIYGAKGLAWVKVVEDGLTGPIGRFFETENVETLLTLTGAEAGDLVMFVADKPNVVAQSLGALRVKLAKELGLIDETKLNFLWVTDWPLLEYDEDAKRYVAAHHPFTSPKEADIAKLGTAPEEAEANAYDIVLNGYELGGGSIRIHDGELQEKMFEVLGFTKEQAQEQFGFLLDAFKYGAPPHGGIALGLDRLVMLLTNRTNLRDTIAFPKTASATCLLTNAPSEVSDKQLEELSLRIRH.

E177 contributes to the L-aspartate binding site. The aspartate stretch occupies residues 201 to 204; that stretch reads QLFK. An L-aspartate-binding site is contributed by R223. ATP-binding positions include 223–225 and Q232; that span reads RDE. Residue H451 participates in L-aspartate binding. ATP is bound at residue E485. Position 492 (R492) interacts with L-aspartate. 537-540 is a binding site for ATP; the sequence is GLDR.

It belongs to the class-II aminoacyl-tRNA synthetase family. Type 1 subfamily. As to quaternary structure, homodimer.

The protein resides in the cytoplasm. It carries out the reaction tRNA(Asp) + L-aspartate + ATP = L-aspartyl-tRNA(Asp) + AMP + diphosphate. In terms of biological role, catalyzes the attachment of L-aspartate to tRNA(Asp) in a two-step reaction: L-aspartate is first activated by ATP to form Asp-AMP and then transferred to the acceptor end of tRNA(Asp). In Staphylococcus aureus (strain NCTC 8325 / PS 47), this protein is Aspartate--tRNA ligase.